Here is a 154-residue protein sequence, read N- to C-terminus: MKLHELKPAEGSRKNRKRVGRGPGGTDKTAGRGHKGQKSRSGAGKGSFFEGGRSSLISRLPKRGFNNVGTTYEVIQLGQLDVLEGDTFNREALELAGLVRRKNRPVKLLATGEVTRAVTVHVDAASAAAVKAVEAAGGKVILPNSQTEDAQKAE.

The span at methionine 1–arginine 13 shows a compositional bias: basic and acidic residues. The segment at methionine 1 to glycine 52 is disordered.

It belongs to the universal ribosomal protein uL15 family. As to quaternary structure, part of the 50S ribosomal subunit.

Functionally, binds to the 23S rRNA. The chain is Large ribosomal subunit protein uL15 from Deinococcus deserti (strain DSM 17065 / CIP 109153 / LMG 22923 / VCD115).